Reading from the N-terminus, the 797-residue chain is Protein tamozhennic (797 aa).

The region spanning Q79–G146 is the PUB domain. Disordered regions lie at residues A515–L570 and L638–V697. Residues E662–K679 are compositionally biased toward basic and acidic residues. The segment at I735 to D766 adopts a RanBP2-type zinc-finger fold.

As to quaternary structure, homomultimer. Binds to dl and msl-1 via their nuclear localization signal (NLS). Also binds to Ran, Ran-like and mbo.

The protein resides in the cytoplasm. Functionally, has an essential role during oogenesis and embryogenesis, perhaps in modulating the levels of nuclear import of additional proteins. Modulates the nuclear import of dorsal (dl), Dif and male specific lethal 1 (msl-1). Negatively regulates nuclear import of dl and controls the accumulation of dl in the nucleus after immune challenge. The chain is Protein tamozhennic (tamo) from Drosophila melanogaster (Fruit fly).